The sequence spans 191 residues: 3-isopropylmalate dehydratase small subunit (191 aa).

It belongs to the LeuD family. LeuD type 1 subfamily. As to quaternary structure, heterodimer of LeuC and LeuD.

It catalyses the reaction (2R,3S)-3-isopropylmalate = (2S)-2-isopropylmalate. The protein operates within amino-acid biosynthesis; L-leucine biosynthesis; L-leucine from 3-methyl-2-oxobutanoate: step 2/4. Catalyzes the isomerization between 2-isopropylmalate and 3-isopropylmalate, via the formation of 2-isopropylmaleate. This Lactococcus lactis subsp. cremoris (strain MG1363) protein is 3-isopropylmalate dehydratase small subunit.